Reading from the N-terminus, the 149-residue chain is Large ribosomal subunit protein uL15 (149 aa).

The tract at residues 8–49 (HDLRPAAGSNKPKTRVGRGEASKGKTAGRGTKGTGARKQVPA) is disordered. Over residues 31 to 45 (GKTAGRGTKGTGARK) the composition is skewed to low complexity.

Belongs to the universal ribosomal protein uL15 family. As to quaternary structure, part of the 50S ribosomal subunit.

In terms of biological role, binds to the 23S rRNA. The protein is Large ribosomal subunit protein uL15 of Corynebacterium aurimucosum (strain ATCC 700975 / DSM 44827 / CIP 107346 / CN-1) (Corynebacterium nigricans).